A 424-amino-acid chain; its full sequence is Serine--tRNA ligase (424 aa).

Residue 229-231 (TAE) coordinates L-serine. ATP is bound by residues 260 to 262 (RKE) and Val276. Glu283 serves as a coordination point for L-serine. 347 to 350 (ELVS) provides a ligand contact to ATP. Thr383 is a binding site for L-serine.

This sequence belongs to the class-II aminoacyl-tRNA synthetase family. Type-1 seryl-tRNA synthetase subfamily. Homodimer. The tRNA molecule binds across the dimer.

It is found in the cytoplasm. It catalyses the reaction tRNA(Ser) + L-serine + ATP = L-seryl-tRNA(Ser) + AMP + diphosphate + H(+). The catalysed reaction is tRNA(Sec) + L-serine + ATP = L-seryl-tRNA(Sec) + AMP + diphosphate + H(+). It participates in aminoacyl-tRNA biosynthesis; selenocysteinyl-tRNA(Sec) biosynthesis; L-seryl-tRNA(Sec) from L-serine and tRNA(Sec): step 1/1. Functionally, catalyzes the attachment of serine to tRNA(Ser). Is also able to aminoacylate tRNA(Sec) with serine, to form the misacylated tRNA L-seryl-tRNA(Sec), which will be further converted into selenocysteinyl-tRNA(Sec). The sequence is that of Serine--tRNA ligase from Methanosphaera stadtmanae (strain ATCC 43021 / DSM 3091 / JCM 11832 / MCB-3).